We begin with the raw amino-acid sequence, 697 residues long: Trishanku (697 aa).

Positions methionine 1 to aspartate 94 are disordered. Low complexity predominate over residues asparagine 12–asparagine 47. The segment covering lysine 58–leucine 72 has biased composition (polar residues). The span at asparagine 73–asparagine 91 shows a compositional bias: low complexity. The 68-residue stretch at serine 122–tyrosine 189 folds into the BTB domain. A disordered region spans residues isoleucine 311–serine 455. The span at glutamine 312–lysine 331 shows a compositional bias: low complexity. The segment covering serine 332–lysine 344 has biased composition (basic residues). Residues glycine 353 to arginine 363 are compositionally biased toward low complexity. Over residues aspartate 416 to glutamate 453 the composition is skewed to acidic residues.

As to expression, expressed strongly in presumptive spore (prespore or psp) cells during the late G2 phase of cell cycle. Present at a low level in vegetative cells.

Required for normal morphogenesis and cell-type stability. This is Trishanku (triA) from Dictyostelium discoideum (Social amoeba).